Consider the following 36-residue polypeptide: DSLSEDNWKFVVSSSCETILEILDIGGCAKGVAEYT.

It belongs to the phospholipase A2 family. Group III subfamily. As to quaternary structure, heterodimer composed of a small subunit and a large subunit; disulfid-linked. It depends on Ca(2+) as a cofactor. In terms of tissue distribution, expressed by the venom gland.

Its subcellular location is the secreted. It carries out the reaction a 1,2-diacyl-sn-glycero-3-phosphocholine + H2O = a 1-acyl-sn-glycero-3-phosphocholine + a fatty acid + H(+). Its function is as follows. Scorpion venom phospholipase A2 (PLA2) that impacts angiogenesis in vitro and in vivo without showing any cytotoxic or apoptotic signs. The antiangiogenic effect is independent from the catalytic activity and seems to be held by its small subunit. PLA2 catalyzes the calcium-dependent hydrolysis of the 2-acyl groups in 3-sn-phosphoglycerides. In Hemiscorpius lepturus (Scorpion), this protein is Phospholipase A2 hemilipin-2.